Consider the following 308-residue polypeptide: Eukaryotic translation initiation factor 3 subunit G-B (308 aa).

Disordered stretches follow at residues 1-35 and 176-227; these read MPTG…KQDP and STAD…DDNA. A compositionally biased stretch (low complexity) spans 185 to 194; it reads GAEPEPAQAP. Residues 209 to 227 are compositionally biased toward basic and acidic residues; it reads GGSRRGESMQPNRRADDNA. In terms of domain architecture, RRM spans 227–305; that stretch reads ATIRVTNLSE…LILNVEWAKP (79 aa).

Belongs to the eIF-3 subunit G family. Component of the eukaryotic translation initiation factor 3 (eIF-3) complex, which is composed of 13 subunits: eif3a, eif3b, eif3c, eif3d, eif3e, eif3f, eif3g, eif3h, eif3i, eif3j, eif3k, eif3l and eif3m.

The protein resides in the cytoplasm. Its function is as follows. RNA-binding component of the eukaryotic translation initiation factor 3 (eIF-3) complex, which is involved in protein synthesis of a specialized repertoire of mRNAs and, together with other initiation factors, stimulates binding of mRNA and methionyl-tRNAi to the 40S ribosome. The eIF-3 complex specifically targets and initiates translation of a subset of mRNAs involved in cell proliferation. This subunit can bind 18S rRNA. In Xenopus laevis (African clawed frog), this protein is Eukaryotic translation initiation factor 3 subunit G-B (eif3g-b).